A 259-amino-acid chain; its full sequence is Ribonuclease HII (259 aa).

The RNase H type-2 domain occupies 70 to 258; the sequence is TLIAGIDEVG…VKSLVLGKKE (189 aa). Residues Asp76, Glu77, and Asp168 each contribute to the a divalent metal cation site.

This sequence belongs to the RNase HII family. Mn(2+) serves as cofactor. Requires Mg(2+) as cofactor.

It localises to the cytoplasm. The enzyme catalyses Endonucleolytic cleavage to 5'-phosphomonoester.. Endonuclease that specifically degrades the RNA of RNA-DNA hybrids. This is Ribonuclease HII from Streptococcus pneumoniae (strain 70585).